Reading from the N-terminus, the 529-residue chain is Peptide chain release factor 3 (529 aa).

In terms of domain architecture, tr-type G spans Ala11–Met280. GTP-binding positions include Ser20 to Thr27, Asp88 to His92, and Asn142 to Asp145.

The protein belongs to the TRAFAC class translation factor GTPase superfamily. Classic translation factor GTPase family. PrfC subfamily.

The protein resides in the cytoplasm. Functionally, increases the formation of ribosomal termination complexes and stimulates activities of RF-1 and RF-2. It binds guanine nucleotides and has strong preference for UGA stop codons. It may interact directly with the ribosome. The stimulation of RF-1 and RF-2 is significantly reduced by GTP and GDP, but not by GMP. This Shigella flexneri protein is Peptide chain release factor 3.